The sequence spans 172 residues: Translation initiation factor IF-3 (172 aa).

The protein belongs to the IF-3 family. Monomer.

The protein resides in the cytoplasm. Functionally, IF-3 binds to the 30S ribosomal subunit and shifts the equilibrium between 70S ribosomes and their 50S and 30S subunits in favor of the free subunits, thus enhancing the availability of 30S subunits on which protein synthesis initiation begins. This Bartonella henselae (strain ATCC 49882 / DSM 28221 / CCUG 30454 / Houston 1) (Rochalimaea henselae) protein is Translation initiation factor IF-3.